An 82-amino-acid polypeptide reads, in one-letter code: uncharacterized protein (82 aa).

A 2Fe-2S ferredoxin-type domain is found at 1–82; sequence MKIHLIRHNT…HVESDIEIDL (82 aa). Cys35, Cys40, Cys43, and Cys72 together coordinate [2Fe-2S] cluster.

Requires [2Fe-2S] cluster as cofactor.

This is an uncharacterized protein from Haemophilus influenzae (strain ATCC 51907 / DSM 11121 / KW20 / Rd).